Reading from the N-terminus, the 58-residue chain is Gigasin-4 (58 aa).

Component of the organic matrix of calcified shell layers.

The chain is Gigasin-4 from Magallana gigas (Pacific oyster).